The primary structure comprises 407 residues: MKIYLVGGAVRDSLLNIDVKDKDWVVVGSTPQKMDSLGYQTVGQDFPVFLNPKTKEEYALARTERKSGQGYKGFTCYAEPDVTLEEDLLRRDLTINAIAQADNGELIDPYNGQQDIIDRTLRHVSDAFTEDPLRVLRVARFAARFHHLGFTVAPETMHLMKVLVDSGELSHLTAERVWQEWQKSLSSQHPEIFLSTLKECGALAIVLPELNALFGIPQPEKWHPEIDTGIHTLMVAQQAALLSQDLPTRFAAQVHDLGKGVTPESEWPSHKLHCHTGIKLIKRLCDRVRVPNDYRDLALLVCEHHSNIHRAAELRAQTFIKIFDKMDVWRKPERLAPILLCCQADHAGRLGLETQPYPQKKRFEAAFDAAKNVEVKDVVAAGFKGPEIREELSKRRIEAVKDKLNIK.

Residues Gly8 and Arg11 each contribute to the ATP site. CTP is bound by residues Gly8 and Arg11. Residues Asp21 and Asp23 each coordinate Mg(2+). Residues Arg91, Arg137, and Arg140 each coordinate ATP. CTP is bound by residues Arg91, Arg137, and Arg140. One can recognise an HD domain in the interval 228–329; sequence TGIHTLMVAQ…IKIFDKMDVW (102 aa).

It belongs to the tRNA nucleotidyltransferase/poly(A) polymerase family. Bacterial CCA-adding enzyme type 1 subfamily. In terms of assembly, monomer. Can also form homodimers and oligomers. Requires Mg(2+) as cofactor. Ni(2+) is required as a cofactor.

It catalyses the reaction a tRNA precursor + 2 CTP + ATP = a tRNA with a 3' CCA end + 3 diphosphate. It carries out the reaction a tRNA with a 3' CCA end + 2 CTP + ATP = a tRNA with a 3' CCACCA end + 3 diphosphate. Functionally, catalyzes the addition and repair of the essential 3'-terminal CCA sequence in tRNAs without using a nucleic acid template. Adds these three nucleotides in the order of C, C, and A to the tRNA nucleotide-73, using CTP and ATP as substrates and producing inorganic pyrophosphate. tRNA 3'-terminal CCA addition is required both for tRNA processing and repair. Also involved in tRNA surveillance by mediating tandem CCA addition to generate a CCACCA at the 3' terminus of unstable tRNAs. While stable tRNAs receive only 3'-terminal CCA, unstable tRNAs are marked with CCACCA and rapidly degraded. This Aliivibrio fischeri (strain ATCC 700601 / ES114) (Vibrio fischeri) protein is Multifunctional CCA protein.